We begin with the raw amino-acid sequence, 461 residues long: tRNA modification GTPase MnmE (461 aa).

(6S)-5-formyl-5,6,7,8-tetrahydrofolate contacts are provided by arginine 23, glutamate 88, and arginine 127. The region spanning 223–383 is the TrmE-type G domain; it reads GLNTVIVGKP…LKECIKNLFF (161 aa). Asparagine 233 serves as a coordination point for K(+). Residues 233 to 238, 252 to 258, and 277 to 280 each bind GTP; these read NVGKSS, TEIPGTT, and DTAG. Serine 237 contacts Mg(2+). Residues threonine 252, isoleucine 254, and threonine 257 each coordinate K(+). Threonine 258 serves as a coordination point for Mg(2+). Lysine 461 is a binding site for (6S)-5-formyl-5,6,7,8-tetrahydrofolate.

Belongs to the TRAFAC class TrmE-Era-EngA-EngB-Septin-like GTPase superfamily. TrmE GTPase family. Homodimer. Heterotetramer of two MnmE and two MnmG subunits. K(+) is required as a cofactor.

The protein resides in the cytoplasm. Functionally, exhibits a very high intrinsic GTPase hydrolysis rate. Involved in the addition of a carboxymethylaminomethyl (cmnm) group at the wobble position (U34) of certain tRNAs, forming tRNA-cmnm(5)s(2)U34. The sequence is that of tRNA modification GTPase MnmE from Clostridium botulinum (strain Loch Maree / Type A3).